A 204-amino-acid polypeptide reads, in one-letter code: dITP/XTP pyrophosphatase (204 aa).

8-13 (SNNAKK) serves as a coordination point for substrate. Positions 43 and 72 each coordinate Mg(2+). D72 (proton acceptor) is an active-site residue. Substrate-binding positions include S73, 155 to 158 (FGYD), K180, and 185 to 186 (HR).

The protein belongs to the HAM1 NTPase family. Homodimer. It depends on Mg(2+) as a cofactor.

It catalyses the reaction XTP + H2O = XMP + diphosphate + H(+). The enzyme catalyses dITP + H2O = dIMP + diphosphate + H(+). The catalysed reaction is ITP + H2O = IMP + diphosphate + H(+). Its function is as follows. Pyrophosphatase that catalyzes the hydrolysis of nucleoside triphosphates to their monophosphate derivatives, with a high preference for the non-canonical purine nucleotides XTP (xanthosine triphosphate), dITP (deoxyinosine triphosphate) and ITP. Seems to function as a house-cleaning enzyme that removes non-canonical purine nucleotides from the nucleotide pool, thus preventing their incorporation into DNA/RNA and avoiding chromosomal lesions. This Cutibacterium acnes (strain DSM 16379 / KPA171202) (Propionibacterium acnes) protein is dITP/XTP pyrophosphatase.